A 212-amino-acid chain; its full sequence is Uracil phosphoribosyltransferase (212 aa).

5-phospho-alpha-D-ribose 1-diphosphate contacts are provided by residues Arg78, Arg103, and 130–138 (DPMLATGGS). Residues Ile193 and 198-200 (GDA) contribute to the uracil site. Asp199 is a 5-phospho-alpha-D-ribose 1-diphosphate binding site.

It belongs to the UPRTase family. The cofactor is Mg(2+).

The catalysed reaction is UMP + diphosphate = 5-phospho-alpha-D-ribose 1-diphosphate + uracil. It functions in the pathway pyrimidine metabolism; UMP biosynthesis via salvage pathway; UMP from uracil: step 1/1. Its activity is regulated as follows. Allosterically activated by GTP. Its function is as follows. Catalyzes the conversion of uracil and 5-phospho-alpha-D-ribose 1-diphosphate (PRPP) to UMP and diphosphate. The protein is Uracil phosphoribosyltransferase of Bordetella petrii (strain ATCC BAA-461 / DSM 12804 / CCUG 43448).